We begin with the raw amino-acid sequence, 340 residues long: Anthranilate phosphoribosyltransferase (340 aa).

5-phospho-alpha-D-ribose 1-diphosphate-binding positions include Gly79, 82–83 (GD), Ser87, 89–92 (NIST), 107–115 (KHGNRSVSS), and Ser119. Gly79 is a binding site for anthranilate. Residue Ser91 coordinates Mg(2+). Asn110 provides a ligand contact to anthranilate. Arg165 contributes to the anthranilate binding site. Mg(2+)-binding residues include Asp224 and Glu225.

It belongs to the anthranilate phosphoribosyltransferase family. As to quaternary structure, homodimer. Requires Mg(2+) as cofactor.

The enzyme catalyses N-(5-phospho-beta-D-ribosyl)anthranilate + diphosphate = 5-phospho-alpha-D-ribose 1-diphosphate + anthranilate. Its pathway is amino-acid biosynthesis; L-tryptophan biosynthesis; L-tryptophan from chorismate: step 2/5. Its function is as follows. Catalyzes the transfer of the phosphoribosyl group of 5-phosphorylribose-1-pyrophosphate (PRPP) to anthranilate to yield N-(5'-phosphoribosyl)-anthranilate (PRA). The sequence is that of Anthranilate phosphoribosyltransferase from Oceanobacillus iheyensis (strain DSM 14371 / CIP 107618 / JCM 11309 / KCTC 3954 / HTE831).